The primary structure comprises 89 residues: Large ribosomal subunit protein bL27 (89 aa).

The disordered stretch occupies residues 1-21 (MAHKKSGGSSRNGRDSNPKYL).

Belongs to the bacterial ribosomal protein bL27 family.

This Hyphomonas neptunium (strain ATCC 15444) protein is Large ribosomal subunit protein bL27.